The chain runs to 343 residues: Vacuolar membrane protein Kpol_1003p17 (343 aa).

Residues 45 to 65 (TTDTSGTSTSSRDVSSGQSTL) form a disordered region. Residues 101-121 (FIAVGSIIGGIFGGVLIWWMI) traverse the membrane as a helical segment. Residues 235-343 (EVLQQQRQRR…YLDDMLENDN (109 aa)) form a disordered region. Positions 254–264 (ELPSTPPSNFK) are enriched in polar residues. The span at 269–280 (KPERSASPERKS) shows a compositional bias: basic and acidic residues. The segment covering 281 to 290 (RSPIRQHRKN) has biased composition (basic residues).

Belongs to the PRM5 family.

It localises to the vacuole membrane. This Vanderwaltozyma polyspora (strain ATCC 22028 / DSM 70294 / BCRC 21397 / CBS 2163 / NBRC 10782 / NRRL Y-8283 / UCD 57-17) (Kluyveromyces polysporus) protein is Vacuolar membrane protein Kpol_1003p17.